Reading from the N-terminus, the 163-residue chain is UPF0262 protein RPA4530 (163 aa).

Belongs to the UPF0262 family.

The chain is UPF0262 protein RPA4530 from Rhodopseudomonas palustris (strain ATCC BAA-98 / CGA009).